The sequence spans 130 residues: Small ribosomal subunit protein bS6 (130 aa).

The segment at 100 to 130 is disordered; the sequence is SPMVKAKDERRERREDFAEAGDDVDAGDSEE. The segment covering 104–116 has biased composition (basic and acidic residues); it reads KAKDERRERREDF. A compositionally biased stretch (acidic residues) spans 117–130; it reads AEAGDDVDAGDSEE.

It belongs to the bacterial ribosomal protein bS6 family.

Its function is as follows. Binds together with bS18 to 16S ribosomal RNA. The protein is Small ribosomal subunit protein bS6 of Pectobacterium carotovorum subsp. carotovorum (strain PC1).